Here is a 313-residue protein sequence, read N- to C-terminus: tRNA dimethylallyltransferase (313 aa).

12 to 19 (GPTASGKS) provides a ligand contact to ATP. 14–19 (TASGKS) lines the substrate pocket. 2 interaction with substrate tRNA regions span residues 37 to 40 (DSMQ) and 161 to 165 (QRSIR).

This sequence belongs to the IPP transferase family. Monomer. Mg(2+) is required as a cofactor.

The enzyme catalyses adenosine(37) in tRNA + dimethylallyl diphosphate = N(6)-dimethylallyladenosine(37) in tRNA + diphosphate. Catalyzes the transfer of a dimethylallyl group onto the adenine at position 37 in tRNAs that read codons beginning with uridine, leading to the formation of N6-(dimethylallyl)adenosine (i(6)A). The polypeptide is tRNA dimethylallyltransferase (Pelagibacter ubique (strain HTCC1062)).